Consider the following 320-residue polypeptide: Methionyl-tRNA formyltransferase (320 aa).

114 to 117 provides a ligand contact to (6S)-5,6,7,8-tetrahydrofolate; that stretch reads SLLP.

The protein belongs to the Fmt family.

The catalysed reaction is L-methionyl-tRNA(fMet) + (6R)-10-formyltetrahydrofolate = N-formyl-L-methionyl-tRNA(fMet) + (6S)-5,6,7,8-tetrahydrofolate + H(+). Its function is as follows. Attaches a formyl group to the free amino group of methionyl-tRNA(fMet). The formyl group appears to play a dual role in the initiator identity of N-formylmethionyl-tRNA by promoting its recognition by IF2 and preventing the misappropriation of this tRNA by the elongation apparatus. This chain is Methionyl-tRNA formyltransferase, found in Acinetobacter baumannii (strain AB307-0294).